Consider the following 102-residue polypeptide: Small ribosomal subunit protein uS10 (102 aa).

Belongs to the universal ribosomal protein uS10 family. As to quaternary structure, part of the 30S ribosomal subunit.

In terms of biological role, involved in the binding of tRNA to the ribosomes. The chain is Small ribosomal subunit protein uS10 from Acidiphilium cryptum (strain JF-5).